The following is a 343-amino-acid chain: Protease inhibitor Egf1.5a (343 aa).

The first 28 residues, 1–28 (MYIDTGIMSNNIFLFAFFALVGLTRIEA), serve as a signal peptide directing secretion. One can recognise a TIL domain in the interval 52 to 104 (CRENEHYNSTRIECEDECNDRNNKLCYRFQQFCWCNEGYIRNSSHICVKLEDC).

The protein belongs to the polydnaviridae EGF-like motif protein family. In terms of assembly, interacts with host PAP1, PAP3 and SPH2.

Functionally, counteracts the host humoral immune response by inhibiting the processing and the amidolytic activity of host PAP1 and PAP3. Thereby, melanization of host hemolymph, normally producing several reactive intermediates toxic for viruses, is deregulated and proper immune response cannot occur. The protein is Protease inhibitor Egf1.5a (O1) of Microplitis demolitor bracovirus (isolate Webb) (MdBV).